A 343-amino-acid chain; its full sequence is Tetraacyldisaccharide 4'-kinase (343 aa).

ATP is bound at residue 51–58 (HGGGAGKT).

The protein belongs to the LpxK family.

The enzyme catalyses a lipid A disaccharide + ATP = a lipid IVA + ADP + H(+). The protein operates within glycolipid biosynthesis; lipid IV(A) biosynthesis; lipid IV(A) from (3R)-3-hydroxytetradecanoyl-[acyl-carrier-protein] and UDP-N-acetyl-alpha-D-glucosamine: step 6/6. Functionally, transfers the gamma-phosphate of ATP to the 4'-position of a tetraacyldisaccharide 1-phosphate intermediate (termed DS-1-P) to form tetraacyldisaccharide 1,4'-bis-phosphate (lipid IVA). The protein is Tetraacyldisaccharide 4'-kinase of Rhodopseudomonas palustris (strain BisB18).